The chain runs to 617 residues: Dihydroxy-acid dehydratase (617 aa).

Asp-81 is a Mg(2+) binding site. [2Fe-2S] cluster is bound at residue Cys-122. Asp-123 and Lys-124 together coordinate Mg(2+). At Lys-124 the chain carries N6-carboxylysine. Cys-195 provides a ligand contact to [2Fe-2S] cluster. Mg(2+) is bound at residue Glu-492. Ser-518 (proton acceptor) is an active-site residue.

This sequence belongs to the IlvD/Edd family. As to quaternary structure, homodimer. [2Fe-2S] cluster serves as cofactor. The cofactor is Mg(2+).

The enzyme catalyses (2R)-2,3-dihydroxy-3-methylbutanoate = 3-methyl-2-oxobutanoate + H2O. It catalyses the reaction (2R,3R)-2,3-dihydroxy-3-methylpentanoate = (S)-3-methyl-2-oxopentanoate + H2O. It participates in amino-acid biosynthesis; L-isoleucine biosynthesis; L-isoleucine from 2-oxobutanoate: step 3/4. The protein operates within amino-acid biosynthesis; L-valine biosynthesis; L-valine from pyruvate: step 3/4. Functions in the biosynthesis of branched-chain amino acids. Catalyzes the dehydration of (2R,3R)-2,3-dihydroxy-3-methylpentanoate (2,3-dihydroxy-3-methylvalerate) into 2-oxo-3-methylpentanoate (2-oxo-3-methylvalerate) and of (2R)-2,3-dihydroxy-3-methylbutanoate (2,3-dihydroxyisovalerate) into 2-oxo-3-methylbutanoate (2-oxoisovalerate), the penultimate precursor to L-isoleucine and L-valine, respectively. The protein is Dihydroxy-acid dehydratase of Buchnera aphidicola subsp. Cinara cedri (strain Cc).